We begin with the raw amino-acid sequence, 336 residues long: MGRGKKMSKPGDGRSGDVPETCRTGGTNENHPKMNGEVVHLGQPKIYSYMSPTKSPSGRPPLQEENSVAHHESKNLGKPTTETRKKAEVEKKRISSATELSVKSSKQRETECNSIGEYFQTKQELTDVQRNTALTPVDKLQSQKMVKNKSQRRKAQRKKSPNRKLTDYYPVRRSCRKSKTELESEEKMRIDELIQTGKEDGMKMDMIIGKGRGVIATRDFQRGEFVVEYHGDLIEITDAKRREASYAQDSATGCYMYYFQYLNKTYCIDATRETGRLGRLINHSKSGNCHTKLHNISNVPHLILVASRDILVGEELLYDYGDRRKSSIEAHPWLKN.

2 disordered regions span residues 1–107 and 141–165; these read MGRG…SSKQ and QSQK…NRKL. Positions 67–93 are enriched in basic and acidic residues; sequence SVAHHESKNLGKPTTETRKKAEVEKKR. The span at 95 to 104 shows a compositional bias: polar residues; the sequence is SSATELSVKS. A compositionally biased stretch (basic residues) spans 146–162; it reads VKNKSQRRKAQRKKSPN. Residues 200–321 enclose the SET domain; sequence DGMKMDMIIG…VGEELLYDYG (122 aa). Residues 210 to 212, tyrosine 255, and 282 to 283 each bind S-adenosyl-L-methionine; these read KGR and NH.

This sequence belongs to the class V-like SAM-binding methyltransferase superfamily. Histone-lysine methyltransferase family. PR/SET subfamily. In terms of processing, phosphorylated during mitosis.

Its subcellular location is the nucleus. It is found in the chromosome. The catalysed reaction is L-lysyl(20)-[histone H4] + S-adenosyl-L-methionine = N(6)-methyl-L-lysyl(20)-[histone H4] + S-adenosyl-L-homocysteine + H(+). It carries out the reaction L-lysyl-[protein] + S-adenosyl-L-methionine = N(6)-methyl-L-lysyl-[protein] + S-adenosyl-L-homocysteine + H(+). Its function is as follows. Protein-lysine N-methyltransferase that monomethylates both histones and non-histone proteins. Specifically monomethylates 'Lys-20' of histone H4 (H4K20me1). H4K20me1 is enriched during mitosis and represents a specific tag for epigenetic transcriptional repression. Mainly functions in euchromatin regions, thereby playing a central role in the silencing of euchromatic genes. Required for cell proliferation, probably by contributing to the maintenance of proper higher-order structure of DNA during mitosis. Involved in chromosome condensation and proper cytokinesis. This is N-lysine methyltransferase KMT5A-B from Xenopus laevis (African clawed frog).